Consider the following 102-residue polypeptide: Large ribosomal subunit protein bL21 (102 aa).

Belongs to the bacterial ribosomal protein bL21 family. In terms of assembly, part of the 50S ribosomal subunit. Contacts protein L20.

Functionally, this protein binds to 23S rRNA in the presence of protein L20. In Limosilactobacillus fermentum (strain NBRC 3956 / LMG 18251) (Lactobacillus fermentum), this protein is Large ribosomal subunit protein bL21.